A 508-amino-acid polypeptide reads, in one-letter code: Photosystem II CP47 reaction center protein (508 aa).

6 consecutive transmembrane segments (helical) span residues 21–36 (AVHI…WAGS), 101–115 (IVFS…IWHW), 140–156 (GIHL…FGAF), 203–218 (IAAG…FHLS), 237–252 (VLSS…AFVV), and 457–472 (TFAL…HGAR).

It belongs to the PsbB/PsbC family. PsbB subfamily. In terms of assembly, PSII is composed of 1 copy each of membrane proteins PsbA, PsbB, PsbC, PsbD, PsbE, PsbF, PsbH, PsbI, PsbJ, PsbK, PsbL, PsbM, PsbT, PsbX, PsbY, PsbZ, Psb30/Ycf12, at least 3 peripheral proteins of the oxygen-evolving complex and a large number of cofactors. It forms dimeric complexes. Binds multiple chlorophylls. PSII binds additional chlorophylls, carotenoids and specific lipids. is required as a cofactor.

It localises to the plastid. The protein resides in the chloroplast thylakoid membrane. One of the components of the core complex of photosystem II (PSII). It binds chlorophyll and helps catalyze the primary light-induced photochemical processes of PSII. PSII is a light-driven water:plastoquinone oxidoreductase, using light energy to abstract electrons from H(2)O, generating O(2) and a proton gradient subsequently used for ATP formation. This Triticum aestivum (Wheat) protein is Photosystem II CP47 reaction center protein.